The primary structure comprises 121 residues: Non-structural protein 3a (121 aa).

The first 39 residues, 1-39 (MMSMRSRRSMFIEHFNELMMRVQRPPTLLLILLVANAFS), serve as a signal peptide directing secretion.

This chain is Non-structural protein 3a, found in Bat coronavirus HKU5 (BtCoV).